Reading from the N-terminus, the 101-residue chain is Large ribosomal subunit protein eL30 (101 aa).

Belongs to the eukaryotic ribosomal protein eL30 family.

In Thermococcus celer, this protein is Large ribosomal subunit protein eL30 (rpl30e).